Reading from the N-terminus, the 890-residue chain is Phosphatidate phosphatase LPIN1 (890 aa).

The N-LIP stretch occupies residues 1-108; it reads MNYVGQLAGQ…IPMHLATSPI (108 aa). Phosphoserine occurs at positions 106 and 150. 4 disordered regions span residues 125–183, 228–300, 365–392, and 421–456; these read VDRM…DMFP, SYPN…SSRK, KPPS…SRHL, and SGLA…STSD. The span at 152 to 161 shows a compositional bias: basic residues; sequence VKKRRKRRRK. Positions 153–158 match the Nuclear localization signal motif; the sequence is KKRRKR. 2 stretches are compositionally biased toward basic and acidic residues: residues 162–172 and 252–265; these read SQLDSLKRDDN and SDSE…ERTG. 3 positions are modified to phosphoserine: S252, S254, and S260. T264 is subject to Phosphothreonine. At S294 the chain carries Phosphoserine. K425 is modified (N6-acetyllysine). Over residues 431–440 the composition is skewed to polar residues; sequence GARSANQSPQ. A phosphoserine mark is found at S434, S438, and S449. Residues 441–456 are compositionally biased toward low complexity; it reads SVGSSGVDSGVESTSD. Residue K565 forms a Glycyl lysine isopeptide (Lys-Gly) (interchain with G-Cter in SUMO) linkage. The disordered stretch occupies residues 566–616; that stretch reads EESKPEQCLAGKAHSTGEQPPQLSLATRVKHESSSSDEERAAAKPSNAGHL. The span at 581–590 shows a compositional bias: polar residues; that stretch reads TGEQPPQLSL. Residues 594–607 show a composition bias toward basic and acidic residues; it reads VKHESSSSDEERAA. Position 595 is an N6-acetyllysine (K595). A Glycyl lysine isopeptide (Lys-Gly) (interchain with G-Cter in SUMO) cross-link involves residue K595. Phosphoserine is present on residues S600 and S601. Residues 624–830 are C-LIP; the sequence is YKKTLRLTSE…VNPKGELVQE (207 aa). A DXDXT motif motif is present at residues 678 to 682; the sequence is DIDGT. The LXXIL motif motif lies at 689–693; it reads LGHIL. S887 and S889 each carry phosphoserine.

It belongs to the lipin family. In terms of assembly, interacts (via LXXIL motif) with PPARA. Interacts with PPARGC1A. Interaction with PPARA and PPARGC1A leads to the formation of a complex that modulates gene transcription. Interacts with MEF2C. It depends on Mg(2+) as a cofactor. Requires Mn(2+) as cofactor. Post-translationally, phosphorylated at multiple sites by mTOR in response to insulin, leading to its inactivation. Phosphorylation does not affect the catalytic activity but regulates the localization. Phosphorylation is decreased by epinephrine. Dephosphorylated by the CTDNEP1-CNEP1R1 complex. Dephosphorylation following mTOR inhibition promotes its activity. In terms of processing, acetylation at Lys-425 and Lys-595 by KAT5 in response to fatty acids promotes translocation to the endoplasmic reticulum and synthesis of diacylglycerol. Sumoylated. Specifically expressed in skeletal muscle. Also abundant in adipose tissue. Lower levels in some portions of the digestive tract.

It localises to the cytoplasm. It is found in the cytosol. The protein localises to the endoplasmic reticulum membrane. Its subcellular location is the nucleus membrane. The catalysed reaction is a 1,2-diacyl-sn-glycero-3-phosphate + H2O = a 1,2-diacyl-sn-glycerol + phosphate. The enzyme catalyses 1-octadecanoyl-2-(4Z,7Z,10Z,13Z,16Z,19Z-docosahexaenoyl)-sn-glycero-3-phosphate + H2O = 1-octadecanoyl-2-(4Z,7Z,10Z,13Z,16Z,19Z-docosahexaenoyl)-sn-glycerol + phosphate. It carries out the reaction 1-octadecanoyl-2-(5Z,8Z,11Z,14Z-eicosatetraenoyl)-sn-glycero-3-phosphate + H2O = 1-octadecanoyl-2-(5Z,8Z,11Z,14Z-eicosatetraenoyl)-sn-glycerol + phosphate. It catalyses the reaction 1-octadecanoyl-2-(9Z,12Z-octadecadienoyl)-sn-glycero-3-phosphate + H2O = 1-octadecanoyl-2-(9Z,12Z)-octadecadienoyl-sn-glycerol + phosphate. The catalysed reaction is 1-octadecanoyl-2-(9Z-octadecenoyl)-sn-glycero-3-phosphate + H2O = 1-octadecanoyl-2-(9Z-octadecenoyl)-sn-glycerol + phosphate. The enzyme catalyses 1-hexadecanoyl-2-(4Z,7Z,10Z,13Z,16Z,19Z-docosahexaenoyl)-sn-glycero-3-phosphate + H2O = 1-hexadecanoyl-2-(4Z,7Z,10Z,13Z,16Z,19Z-docosahexaenoyl)-sn-glycerol + phosphate. It carries out the reaction 1,2-dioctadecanoyl-sn-glycero-3-phosphate + H2O = 1,2-dioctadecanoyl-sn-glycerol + phosphate. It catalyses the reaction 1-hexadecanoyl-2-(5Z,8Z,11Z,14Z-eicosatetraenoyl)-sn-glycero-3-phosphate + H2O = 1-hexadecanoyl-2-(5Z,8Z,11Z,14Z-eicosatetraenoyl)-sn-glycerol + phosphate. The catalysed reaction is 1-hexadecanoyl-2-(9Z,12Z-octadecadienoyl)-sn-glycero-3-phosphate + H2O = 1-hexadecanoyl-2-(9Z,12Z-octadecadienoyl)-sn-glycerol + phosphate. The enzyme catalyses 1-hexadecanoyl-2-(9Z-octadecenoyl)-sn-glycero-3-phosphate + H2O = 1-hexadecanoyl-2-(9Z-octadecenoyl)-sn-glycerol + phosphate. It carries out the reaction 1,2-di-(4Z,7Z,10Z,13Z,16Z,19Z-docosahexaenoyl)-sn-glycero-3-phosphate + H2O = 1,2-di-(4Z,7Z,10Z,13Z,16Z,19Z-docosahexaenoyl)-sn-glycerol + phosphate. It catalyses the reaction 1,2-di-(5Z,8Z,11Z,14Z)-eicosatetraenoyl-sn-glycero-3-phosphate + H2O = 1,2-di-(5Z,8Z,11Z,14Z)-eicosatetraenoyl-sn-glycerol + phosphate. The catalysed reaction is 1,2-di-(9Z,12Z-octadecadienoyl)-sn-glycero-3-phosphate + H2O = 1,2-di-(9Z,12Z-octadecadienoyl)-sn-glycerol + phosphate. The enzyme catalyses 1,2-di-(9Z-octadecenoyl)-sn-glycero-3-phosphate + H2O = 1,2-di-(9Z-octadecenoyl)-sn-glycerol + phosphate. It carries out the reaction 1,2-dihexadecanoyl-sn-glycero-3-phosphate + H2O = 1,2-dihexadecanoyl-sn-glycerol + phosphate. Its activity is regulated as follows. Potently inhibited by sphingolipids, in particular, the sphingoid bases sphinganine and sphingosine and ceramide-1-phosphate. Inhibited by concentrations of Mg(2+) and Mn(2+) above their optimums and by Ca(2+), Zn(2+), N-ethylmaleimide and propranolol. Sertraline and propanolol inhibit activity in dose-dependent manners with IC(50) values of 103 uM and 226 uM, respectively. With respect to regulation, sertraline and propanolol inhibit activity in dose-dependent manners with IC(50) values of 108 uM and 271 uM, respectively. Its activity is regulated as follows. Sertraline and propanolol inhibit activity in dose-dependent manners with IC(50) values of 143 uM and 227 uM, respectively. Acts as a magnesium-dependent phosphatidate phosphatase enzyme which catalyzes the conversion of phosphatidic acid to diacylglycerol during triglyceride, phosphatidylcholine and phosphatidylethanolamine biosynthesis and therefore controls the metabolism of fatty acids at different levels. Is involved in adipocyte differentiation. Recruited at the mitochondrion outer membrane and is involved in mitochondrial fission by converting phosphatidic acid to diacylglycerol. Acts also as nuclear transcriptional coactivator for PPARGC1A/PPARA regulatory pathway to modulate lipid metabolism gene expression. The sequence is that of Phosphatidate phosphatase LPIN1 from Homo sapiens (Human).